The chain runs to 392 residues: MSVRESFNPESYELDKNFRLTRFTELKGTGCKVPQDVLQKLLESLQENHYQEDEQFLGAVMPRLGIGMDTCVIPLRHGGLSLVQTTDYIYPIVDDPYMMGRIACANVLSDLYAMGVTECDNMLMLLGVSNKLTEKERDKVMPLVIQGFKDASEEAGTSVTGGQTVINPWIVLGGVATTVCQPNEFIMPDNAVPGDVLVLTKPLGTQVAVAVHQWLDIPEKWNKIKLVVTQEDVELAYQEAMLNMARLNRTAAGLMHTFNAHAATDITGFGILGHAQNLARQQRTEVSFVIHNLPVLAKMAAVSKACGNMFGLMHGTCPETSGGLLICLPREQAARFCAEIKSPKYGEGHQAWIIGIVEKGNRTARIIDKPRIIEVAPQVATQNVNTTPGATS.

Cys-31 is an active-site residue. ATP-binding positions include Lys-32, 67–69 (GMD), Asp-87, Asp-110, and 161–164 (GGQT). Asp-69 is a Mg(2+) binding site. Position 110 (Asp-110) interacts with Mg(2+). Asp-265 is a binding site for Mg(2+). The residue at position 387 (Thr-387) is a Phosphothreonine.

Belongs to the selenophosphate synthase 1 family. Class II subfamily. As to quaternary structure, homodimer. The cofactor is Mg(2+).

Its subcellular location is the cell membrane. It is found in the nucleus membrane. The catalysed reaction is hydrogenselenide + ATP + H2O = selenophosphate + AMP + phosphate + 2 H(+). Synthesizes selenophosphate from selenide and ATP. The polypeptide is Selenide, water dikinase 1 (sephs1) (Danio rerio (Zebrafish)).